Consider the following 80-residue polypeptide: Translational regulator CsrA (80 aa).

The protein belongs to the CsrA/RsmA family. As to quaternary structure, homodimer; the beta-strands of each monomer intercalate to form a hydrophobic core, while the alpha-helices form wings that extend away from the core.

Its subcellular location is the cytoplasm. Functionally, a translational regulator that binds mRNA to regulate translation initiation and/or mRNA stability. Usually binds in the 5'-UTR at or near the Shine-Dalgarno sequence preventing ribosome-binding, thus repressing translation. Its main target seems to be the major flagellin gene, while its function is anatagonized by FliW. This chain is Translational regulator CsrA, found in Desulforamulus reducens (strain ATCC BAA-1160 / DSM 100696 / MI-1) (Desulfotomaculum reducens).